The chain runs to 142 residues: Small ribosomal subunit protein uS12 (142 aa).

This sequence belongs to the universal ribosomal protein uS12 family. Part of the 30S ribosomal subunit.

In terms of biological role, with S4 and S5 plays an important role in translational accuracy. Located at the interface of the 30S and 50S subunits. The protein is Small ribosomal subunit protein uS12 of Archaeoglobus fulgidus (strain ATCC 49558 / DSM 4304 / JCM 9628 / NBRC 100126 / VC-16).